We begin with the raw amino-acid sequence, 264 residues long: MSGSTITPWVVGNWKMNPMRANANQLIEEFKQLLQQNQIADENCHVGVAPVSIALTTVQAQLQDAARTVHTVAQDVSRVAGTGAYTGEVSAELLKDSQINFVLVGHSERRDIFGDNVEILKAKLQNALNAGMTVIYCVGESLEQREQGQAEQVVLQQICDIAPVVTAEQWQNQVVIAYEPIWAIGTGKTASPQDAQAMHAKIREGLCQLTPAGSNIAILYGGSVKAENAVELAACPDINGALVGGASLKAASFYQIVQAFAQSK.

Substrate is bound at residue 13-15; it reads NWK. His-106 functions as the Electrophile in the catalytic mechanism. Residue Glu-179 is the Proton acceptor of the active site. Substrate-binding positions include Gly-185, Ser-223, and 244 to 245; that span reads GG.

The protein belongs to the triosephosphate isomerase family. As to quaternary structure, homodimer.

The protein resides in the cytoplasm. The enzyme catalyses D-glyceraldehyde 3-phosphate = dihydroxyacetone phosphate. It functions in the pathway carbohydrate biosynthesis; gluconeogenesis. The protein operates within carbohydrate degradation; glycolysis; D-glyceraldehyde 3-phosphate from glycerone phosphate: step 1/1. Involved in the gluconeogenesis. Catalyzes stereospecifically the conversion of dihydroxyacetone phosphate (DHAP) to D-glyceraldehyde-3-phosphate (G3P). The chain is Triosephosphate isomerase from Acinetobacter baumannii (strain AB0057).